A 343-amino-acid polypeptide reads, in one-letter code: Malate dehydrogenase, peroxisomal (343 aa).

NAD(+) is bound by residues 8–14 (GASGGVG) and Asp34. Positions 80 and 86 each coordinate substrate. NAD(+) is bound by residues Asn93 and 116 to 118 (ISN). Substrate-binding residues include Asn118 and Arg152. Catalysis depends on His187, which acts as the Proton acceptor. Position 237 (Met237) interacts with NAD(+).

Belongs to the LDH/MDH superfamily. MDH type 1 family. As to quaternary structure, homodimer.

The protein localises to the peroxisome. It catalyses the reaction (S)-malate + NAD(+) = oxaloacetate + NADH + H(+). This Saccharomyces cerevisiae (strain ATCC 204508 / S288c) (Baker's yeast) protein is Malate dehydrogenase, peroxisomal (MDH3).